Here is a 217-residue protein sequence, read N- to C-terminus: Small ribosomal subunit protein uS11m (217 aa).

A mitochondrion-targeting transit peptide spans 1-59 (MLLQPVWKGCRWTQFVRPIRRWNSTGTNRGVPFSFKDISNQEDITNISYPSSSDSVLTK).

This sequence belongs to the universal ribosomal protein uS11 family. Component of the mitochondrial small ribosomal subunit (mt-SSU). Mature yeast 74S mitochondrial ribosomes consist of a small (37S) and a large (54S) subunit. The 37S small subunit contains a 15S ribosomal RNA (15S mt-rRNA) and 34 different proteins. The 54S large subunit contains a 21S rRNA (21S mt-rRNA) and 46 different proteins.

It localises to the mitochondrion. Its function is as follows. Component of the mitochondrial ribosome (mitoribosome), a dedicated translation machinery responsible for the synthesis of mitochondrial genome-encoded proteins, including at least some of the essential transmembrane subunits of the mitochondrial respiratory chain. The mitoribosomes are attached to the mitochondrial inner membrane and translation products are cotranslationally integrated into the membrane. This chain is Small ribosomal subunit protein uS11m (MRPS18), found in Saccharomyces cerevisiae (strain ATCC 204508 / S288c) (Baker's yeast).